The sequence spans 252 residues: MGRMSGEILDNRGRGTAGWSWPSIHPEGRKFGLIAAVASLGAALMAWETIAWPLAFLTLGVLAFFRDPVRVTPRDDRFVVSPADGLITLIQKVPPPRELCADDGSGVRGMNDAPVTRVSIFMSVFDVHINRSPIAGTIRRVVYIPGKFLNADLDKASEENERQHFLVERADGVQIGFTQIAGLIARRIVPFVKGGDIVAVGQRVGLIRFGSRVDVYLPAGTEPKVLMGQKVIAGETVLAEIGEAPMIEGIGQ.

Residue S211 is the Schiff-base intermediate with substrate; via pyruvic acid of the active site. Position 211 is a pyruvic acid (Ser); by autocatalysis (S211).

Belongs to the phosphatidylserine decarboxylase family. PSD-A subfamily. In terms of assembly, heterodimer of a large membrane-associated beta subunit and a small pyruvoyl-containing alpha subunit. Requires pyruvate as cofactor. Post-translationally, is synthesized initially as an inactive proenzyme. Formation of the active enzyme involves a self-maturation process in which the active site pyruvoyl group is generated from an internal serine residue via an autocatalytic post-translational modification. Two non-identical subunits are generated from the proenzyme in this reaction, and the pyruvate is formed at the N-terminus of the alpha chain, which is derived from the carboxyl end of the proenzyme. The post-translation cleavage follows an unusual pathway, termed non-hydrolytic serinolysis, in which the side chain hydroxyl group of the serine supplies its oxygen atom to form the C-terminus of the beta chain, while the remainder of the serine residue undergoes an oxidative deamination to produce ammonia and the pyruvoyl prosthetic group on the alpha chain.

The protein localises to the cell membrane. It carries out the reaction a 1,2-diacyl-sn-glycero-3-phospho-L-serine + H(+) = a 1,2-diacyl-sn-glycero-3-phosphoethanolamine + CO2. It participates in phospholipid metabolism; phosphatidylethanolamine biosynthesis; phosphatidylethanolamine from CDP-diacylglycerol: step 2/2. Catalyzes the formation of phosphatidylethanolamine (PtdEtn) from phosphatidylserine (PtdSer). This Novosphingobium aromaticivorans (strain ATCC 700278 / DSM 12444 / CCUG 56034 / CIP 105152 / NBRC 16084 / F199) protein is Phosphatidylserine decarboxylase proenzyme.